A 131-amino-acid polypeptide reads, in one-letter code: Cuticle protein 79, isoform B (131 aa).

A run of 3 repeats spans residues 37 to 40 (AAPA), 45 to 48 (AAPA), and 53 to 56 (AAPA).

In terms of biological role, component of the cuticle of migratory locust which contains more than 100 different structural proteins. This Locusta migratoria (Migratory locust) protein is Cuticle protein 79, isoform B.